Consider the following 218-residue polypeptide: Uracil-DNA glycosylase (218 aa).

Asp-59 functions as the Proton acceptor in the catalytic mechanism.

Belongs to the uracil-DNA glycosylase (UDG) superfamily. UNG family.

The protein localises to the cytoplasm. The enzyme catalyses Hydrolyzes single-stranded DNA or mismatched double-stranded DNA and polynucleotides, releasing free uracil.. Its function is as follows. Excises uracil residues from the DNA which can arise as a result of misincorporation of dUMP residues by DNA polymerase or due to deamination of cytosine. This chain is Uracil-DNA glycosylase, found in Staphylococcus aureus (strain bovine RF122 / ET3-1).